An 862-amino-acid chain; its full sequence is Leucine--tRNA ligase (862 aa).

Residues 44–54 carry the 'HIGH' region motif; it reads PYPSGRIHMGH. A 'KMSKS' region motif is present at residues 622 to 626; sequence KMSKS. Lysine 625 is a binding site for ATP.

This sequence belongs to the class-I aminoacyl-tRNA synthetase family.

It is found in the cytoplasm. The enzyme catalyses tRNA(Leu) + L-leucine + ATP = L-leucyl-tRNA(Leu) + AMP + diphosphate. This chain is Leucine--tRNA ligase, found in Rhodospirillum rubrum (strain ATCC 11170 / ATH 1.1.1 / DSM 467 / LMG 4362 / NCIMB 8255 / S1).